Consider the following 117-residue polypeptide: Peptidyl-tRNA hydrolase (117 aa).

This sequence belongs to the PTH2 family.

It localises to the cytoplasm. It catalyses the reaction an N-acyl-L-alpha-aminoacyl-tRNA + H2O = an N-acyl-L-amino acid + a tRNA + H(+). Functionally, the natural substrate for this enzyme may be peptidyl-tRNAs which drop off the ribosome during protein synthesis. This Thermoplasma acidophilum (strain ATCC 25905 / DSM 1728 / JCM 9062 / NBRC 15155 / AMRC-C165) protein is Peptidyl-tRNA hydrolase.